Reading from the N-terminus, the 366-residue chain is tRNA-specific 2-thiouridylase MnmA (366 aa).

Residues 10–17 (GLSGGVDS) and methionine 36 contribute to the ATP site. An interaction with target base in tRNA region spans residues 96 to 98 (NPD). Cysteine 101 functions as the Nucleophile in the catalytic mechanism. Cysteine 101 and cysteine 197 are oxidised to a cystine. An ATP-binding site is contributed by glycine 125. An interaction with tRNA region spans residues 147–149 (KDQ). Cysteine 197 functions as the Cysteine persulfide intermediate in the catalytic mechanism. The interaction with tRNA stretch occupies residues 309–310 (RY).

This sequence belongs to the MnmA/TRMU family.

Its subcellular location is the cytoplasm. The enzyme catalyses S-sulfanyl-L-cysteinyl-[protein] + uridine(34) in tRNA + AH2 + ATP = 2-thiouridine(34) in tRNA + L-cysteinyl-[protein] + A + AMP + diphosphate + H(+). In terms of biological role, catalyzes the 2-thiolation of uridine at the wobble position (U34) of tRNA, leading to the formation of s(2)U34. This is tRNA-specific 2-thiouridylase MnmA from Alkalilimnicola ehrlichii (strain ATCC BAA-1101 / DSM 17681 / MLHE-1).